Consider the following 512-residue polypeptide: 2-isopropylmalate synthase (512 aa).

The Pyruvate carboxyltransferase domain maps to 4-266 (IEIFDTTLRD…TTKLNLKEIA (263 aa)). Positions 13, 201, 203, and 237 each coordinate Mn(2+). The interval 390-512 (QLESVQLAYG…GEPTPVSATI (123 aa)) is regulatory domain.

Belongs to the alpha-IPM synthase/homocitrate synthase family. LeuA type 1 subfamily. Homodimer. The cofactor is Mn(2+).

Its subcellular location is the cytoplasm. It carries out the reaction 3-methyl-2-oxobutanoate + acetyl-CoA + H2O = (2S)-2-isopropylmalate + CoA + H(+). Its pathway is amino-acid biosynthesis; L-leucine biosynthesis; L-leucine from 3-methyl-2-oxobutanoate: step 1/4. Catalyzes the condensation of the acetyl group of acetyl-CoA with 3-methyl-2-oxobutanoate (2-ketoisovalerate) to form 3-carboxy-3-hydroxy-4-methylpentanoate (2-isopropylmalate). The sequence is that of 2-isopropylmalate synthase from Brevibacillus brevis (strain 47 / JCM 6285 / NBRC 100599).